We begin with the raw amino-acid sequence, 243 residues long: Carboxy-S-adenosyl-L-methionine synthase (243 aa).

Residues Tyr-35, 68-70 (GCS), 92-93 (DN), and Arg-199 each bind S-adenosyl-L-methionine.

This sequence belongs to the class I-like SAM-binding methyltransferase superfamily. Cx-SAM synthase family. As to quaternary structure, homodimer.

The catalysed reaction is prephenate + S-adenosyl-L-methionine = carboxy-S-adenosyl-L-methionine + 3-phenylpyruvate + H2O. Functionally, catalyzes the conversion of S-adenosyl-L-methionine (SAM) to carboxy-S-adenosyl-L-methionine (Cx-SAM). The protein is Carboxy-S-adenosyl-L-methionine synthase of Helicobacter pylori (strain ATCC 700392 / 26695) (Campylobacter pylori).